A 335-amino-acid polypeptide reads, in one-letter code: Tryptophan--tRNA ligase (335 aa).

ATP-binding positions include Gln-11 to Thr-13 and Gly-19 to Asn-20. Positions Pro-12–Asn-20 match the 'HIGH' region motif. Asp-135 is a binding site for L-tryptophan. ATP is bound by residues Gly-147–Asp-149, Val-189, and Lys-198–Ser-202. Residues Lys-198 to Ser-202 carry the 'KMSKS' region motif.

It belongs to the class-I aminoacyl-tRNA synthetase family. Homodimer.

Its subcellular location is the cytoplasm. It catalyses the reaction tRNA(Trp) + L-tryptophan + ATP = L-tryptophyl-tRNA(Trp) + AMP + diphosphate + H(+). Catalyzes the attachment of tryptophan to tRNA(Trp). This Nostoc sp. (strain PCC 7120 / SAG 25.82 / UTEX 2576) protein is Tryptophan--tRNA ligase.